We begin with the raw amino-acid sequence, 482 residues long: Probable polyamine transporter At1g31820 (482 aa).

The next 11 helical transmembrane spans lie at 36 to 56 (VSML…PFGA), 66 to 86 (LLAL…EALI), 94 to 114 (FPIN…FWGF), 143 to 163 (VPAL…TLLL), 171 to 191 (LTIV…PFAV), 254 to 274 (VIFV…AIPL), 294 to 314 (GWLQ…MFLA), 344 to 364 (TPLL…GLSF), 367 to 387 (IIAA…IAFV), 406 to 426 (TVGS…VIVL), and 429 to 449 (IKVA…KPCL).

Belongs to the amino acid-polyamine-organocation (APC) superfamily. Polyamine:cation symporter (PHS) (TC 2.A.3.12) family.

The protein localises to the cell membrane. Its function is as follows. Probable cell membrane polyamine/proton symporter involved in the polyamine uptake in cells. The sequence is that of Probable polyamine transporter At1g31820 from Arabidopsis thaliana (Mouse-ear cress).